The chain runs to 889 residues: Voltage-gated potassium channel KCNC3 (889 aa).

The tract at residues 1-80 (MLSSVCVWSF…CSGLPAVAMG (80 aa)) is important for normal N-type inactivation. The Cytoplasmic segment spans residues 1 to 291 (MLSSVCVWSF…EDPYSSRAAR (291 aa)). The interval 10–66 (FSGRQGTRKQHSQPAPTPQPPESSPPPLLPPPQQQCAQPGTAASPAGAPLSCGPGGR) is disordered. Over residues 24–42 (APTPQPPESSPPPLLPPPQ) the composition is skewed to pro residues. Zn(2+) is bound by residues His-159, Cys-165, Cys-186, and Cys-187. The interval 202–231 (DSFEAPDSSGNANANAGGAHDAGLDDEAGA) is disordered. A compositionally biased stretch (low complexity) spans 211-222 (GNANANAGGAHD). The helical transmembrane segment at 292–310 (YVAFASLFFILISITTFCL) threads the bilayer. Asn-321 carries an N-linked (GlcNAc...) asparagine glycan. A helical transmembrane segment spans residues 352–371 (VEGVCVVWFTFEFLMRVTFC). Topologically, residues 372 to 380 (PDKVEFLKS) are cytoplasmic. The helical transmembrane segment at 381 to 399 (SLNIIDCVAILPFYLEVGL) threads the bilayer. A helical; Voltage-sensor transmembrane segment spans residues 413–435 (FLRVVRFVRILRIFKLTRHFVGL). At 436–448 (RVLGHTLRASTNE) the chain is on the cytoplasmic side. A helical membrane pass occupies residues 449–470 (FLLLIIFLALGVLIFATMIYYA). Thr-504, Leu-505, Gly-506, and Tyr-507 together coordinate K(+). The Selectivity filter motif lies at 504–509 (TLGYGD). The helical transmembrane segment at 519 to 540 (LVGALCALAGVLTIAMPVPVIV) threads the bilayer. At 541–889 (NNFGMYYSLA…FPSRHSSPAV (349 aa)) the chain is on the cytoplasmic side. 3 disordered regions span residues 557 to 627 (PKKK…LLRG), 691 to 834 (IDQP…PQSL), and 852 to 889 (TLGFPLSLPPRLATGNGGRECPRDPGLPFPSRHSSPAV). Arg-626 is subject to Omega-N-methylarginine. A phosphoserine mark is found at Ser-697 and Ser-702. Residues 748–764 (SQAPPASCPTSTPTQQP) show a composition bias toward low complexity. Thr-759 carries the phosphothreonine modification. Positions 794–808 (HRSHQPPGKHQRGGR) are enriched in basic residues.

Belongs to the potassium channel family. C (Shaw) (TC 1.A.1.2) subfamily. Kv3.3/KCNC3 sub-subfamily. In terms of assembly, homotetramer. Heterotetramer with KCNC1. Interacts (via C-terminus) with HAX1; this interaction modulates channel gating. Identified in a complex with ACTR3, a subunit of the Arp2/3 complex; this interaction is indirect and depends on the presence of HAX1. In terms of processing, N-glycosylated. In terms of tissue distribution, detected on Purkinje cells in the cerebellum molecular layer (at protein level).

The protein localises to the cell membrane. The protein resides in the presynaptic cell membrane. It is found in the perikaryon. Its subcellular location is the cell projection. It localises to the axon. The protein localises to the dendrite. The protein resides in the dendritic spine membrane. It is found in the cytoplasm. Its subcellular location is the cell cortex. It localises to the cytoskeleton. The catalysed reaction is K(+)(in) = K(+)(out). In terms of biological role, voltage-gated potassium channel that plays an important role in the rapid repolarization of fast-firing brain neurons. The channel opens in response to the voltage difference across the membrane, forming a potassium-selective channel through which potassium ions pass in accordance with their electrochemical gradient. The channel displays rapid activation and inactivation kinetics. It plays a role in the regulation of the frequency, shape and duration of action potentials in Purkinje cells. Required for normal survival of cerebellar neurons, probably via its role in regulating the duration and frequency of action potentials that in turn regulate the activity of voltage-gated Ca(2+) channels and cellular Ca(2+) homeostasis. Required for normal motor function. Plays a role in the reorganization of the cortical actin cytoskeleton and the formation of actin veil structures in neuronal growth cones via its interaction with HAX1 and the Arp2/3 complex. This Rattus norvegicus (Rat) protein is Voltage-gated potassium channel KCNC3.